The following is a 513-amino-acid chain: Aspartyl protease family protein 1 (513 aa).

An N-terminal signal peptide occupies residues 1-21 (MVWYSSCRILFLGLLILLASS). The region spanning 104-445 (HYANVTVGTP…DREKLILGWK (342 aa)) is the Peptidase A1 domain. Residues aspartate 122 and aspartate 327 contribute to the active site. Residues 452-488 (GETSARTLPSNRSSSSARPPASSFDPEATNIPSQRPN) form a disordered region. Over residues 455–474 (SARTLPSNRSSSSARPPASS) the composition is skewed to low complexity. The GPI-anchor amidated serine moiety is linked to residue serine 484. Positions 485–513 (QRPNTSTTSAAYSLSISLSLFFFSILAIL) are cleaved as a propeptide — removed in mature form.

Belongs to the peptidase A1 family.

It localises to the cell membrane. Functionally, aspartyl protease. Not able to cleave BAG6. The polypeptide is Aspartyl protease family protein 1 (Arabidopsis thaliana (Mouse-ear cress)).